Here is a 147-residue protein sequence, read N- to C-terminus: Phospholipase A2 inhibitor subunit A (147 aa).

The C-type lectin domain occupies 62–143 (EICRQAGGRI…DDNLLVVCEF (82 aa)). 2 disulfide bridges follow: cysteine 64–cysteine 141 and cysteine 119–cysteine 133. A glycan (N-linked (GlcNAc...) asparagine) is linked at asparagine 103.

This sequence belongs to the alpha-type phospholipase A2 inhibitor family. As to quaternary structure, homotrimer; non-covalently linked. Glycosylated. In terms of tissue distribution, expressed by the liver.

The protein localises to the secreted. Inhibits the enzymatic activity of the acidic phospholipase A2 (PLA2). The sequence is that of Phospholipase A2 inhibitor subunit A from Gloydius brevicaudus siniticus (Chinese mamushi).